A 261-amino-acid chain; its full sequence is Imidazole glycerol phosphate synthase subunit HisF (261 aa).

Residues Asp12 and Asp131 contribute to the active site.

It belongs to the HisA/HisF family. Heterodimer of HisH and HisF.

It is found in the cytoplasm. The enzyme catalyses 5-[(5-phospho-1-deoxy-D-ribulos-1-ylimino)methylamino]-1-(5-phospho-beta-D-ribosyl)imidazole-4-carboxamide + L-glutamine = D-erythro-1-(imidazol-4-yl)glycerol 3-phosphate + 5-amino-1-(5-phospho-beta-D-ribosyl)imidazole-4-carboxamide + L-glutamate + H(+). It participates in amino-acid biosynthesis; L-histidine biosynthesis; L-histidine from 5-phospho-alpha-D-ribose 1-diphosphate: step 5/9. Its function is as follows. IGPS catalyzes the conversion of PRFAR and glutamine to IGP, AICAR and glutamate. The HisF subunit catalyzes the cyclization activity that produces IGP and AICAR from PRFAR using the ammonia provided by the HisH subunit. This chain is Imidazole glycerol phosphate synthase subunit HisF, found in Brucella melitensis biotype 2 (strain ATCC 23457).